We begin with the raw amino-acid sequence, 315 residues long: Aspartate carbamoyltransferase catalytic subunit (315 aa).

Carbamoyl phosphate is bound by residues Arg55 and Thr56. An L-aspartate-binding site is contributed by Lys83. The carbamoyl phosphate site is built by Arg105, His138, and Gln141. Positions 171 and 225 each coordinate L-aspartate. Carbamoyl phosphate contacts are provided by Gly266 and Pro267.

The protein belongs to the aspartate/ornithine carbamoyltransferase superfamily. ATCase family. Heterododecamer (2C3:3R2) of six catalytic PyrB chains organized as two trimers (C3), and six regulatory PyrI chains organized as three dimers (R2).

It carries out the reaction carbamoyl phosphate + L-aspartate = N-carbamoyl-L-aspartate + phosphate + H(+). The protein operates within pyrimidine metabolism; UMP biosynthesis via de novo pathway; (S)-dihydroorotate from bicarbonate: step 2/3. In terms of biological role, catalyzes the condensation of carbamoyl phosphate and aspartate to form carbamoyl aspartate and inorganic phosphate, the committed step in the de novo pyrimidine nucleotide biosynthesis pathway. In Mycolicibacterium gilvum (strain PYR-GCK) (Mycobacterium gilvum (strain PYR-GCK)), this protein is Aspartate carbamoyltransferase catalytic subunit.